The sequence spans 127 residues: Large ribosomal subunit protein uL22 (127 aa).

The protein belongs to the universal ribosomal protein uL22 family. In terms of assembly, part of the 50S ribosomal subunit.

Functionally, this protein binds specifically to 23S rRNA; its binding is stimulated by other ribosomal proteins, e.g. L4, L17, and L20. It is important during the early stages of 50S assembly. It makes multiple contacts with different domains of the 23S rRNA in the assembled 50S subunit and ribosome. In terms of biological role, the globular domain of the protein is located near the polypeptide exit tunnel on the outside of the subunit, while an extended beta-hairpin is found that lines the wall of the exit tunnel in the center of the 70S ribosome. The sequence is that of Large ribosomal subunit protein uL22 from Methylobacterium sp. (strain 4-46).